The primary structure comprises 292 residues: Homoserine kinase (292 aa).

Residue 84-94 participates in ATP binding; it reads PLSRGLGSSSA.

The protein belongs to the GHMP kinase family. Homoserine kinase subfamily.

It is found in the cytoplasm. The enzyme catalyses L-homoserine + ATP = O-phospho-L-homoserine + ADP + H(+). Its pathway is amino-acid biosynthesis; L-threonine biosynthesis; L-threonine from L-aspartate: step 4/5. Its function is as follows. Catalyzes the ATP-dependent phosphorylation of L-homoserine to L-homoserine phosphate. The sequence is that of Homoserine kinase from Campylobacter jejuni subsp. jejuni serotype O:23/36 (strain 81-176).